We begin with the raw amino-acid sequence, 590 residues long: MTLTLSVLICLGLSVGPRTCVQAGTLPKPTLWAEPASVIARGKPVTLWCQGPLETEEYRLDKEGLPWARKRQNPLEPGAKAKFHIPSTVYDSAGRYRCYYETPAGWSEPSDPLELVATGFYAEPTLLALPSPVVASGGNVTLQCDTLDGLLTFVLVEEEQKLPRTLYSQKLPKGPSQALFPVGPVTPSCRWRFRCYYYYRKNPQVWSNPSDLLEILVPGVSRKPSLLIPQGSVVARGGSLTLQCRSDVGYDIFVLYKEGEHDLVQGSGQQPQAGLSQANFTLGPVSRSHGGQYRCYGAHNLSPRWSAPSDPLDILIAGLIPDIPALSVQPGPKVASGENVTLLCQSWHQIDTFFLTKEGAAHPPLCLKSKYQSYRHQAEFSMSPVTSAQGGTYRCYSAIRSYPYLLSSPSYPQELVVSGPSGDPSLSPTGSTPTPGPEDQPLTPTGLDPQSGLGRHLGVVTGVSVAFVLLLFLLLFLLLRHRHQSKHRTSAHFYRPAGAAGPEPKDQGLQKRASPVADIQEEILNAAVKDTQPKDGVEMDAPAAASEAPQDVTYAQLHSLTLRREATEPPPSQEREPPAEPSIYAPLAIH.

The signal sequence occupies residues 1 to 23 (MTLTLSVLICLGLSVGPRTCVQA). The Extracellular segment spans residues 24 to 458 (GTLPKPTLWA…PQSGLGRHLG (435 aa)). Ig-like C2-type domains follow at residues 27 to 116 (PKPT…LELV), 111 to 228 (DPLE…SLLI), 224 to 313 (PSLL…DPLD), and 337 to 418 (GENV…LVVS). A disulfide bond links Cys-49 and Cys-98. An N-linked (GlcNAc...) asparagine glycan is attached at Asn-139. 2 cysteine pairs are disulfide-bonded: Cys-144/Cys-195 and Cys-244/Cys-295. N-linked (GlcNAc...) asparagine glycans are attached at residues Asn-279 and Asn-339. A disulfide bridge links Cys-344 with Cys-395. Low complexity predominate over residues 416-433 (VVSGPSGDPSLSPTGSTP). Residues 416–449 (VVSGPSGDPSLSPTGSTPTPGPEDQPLTPTGLDP) are disordered. The helical transmembrane segment at 459-479 (VVTGVSVAFVLLLFLLLFLLL) threads the bilayer. Residues 480–590 (RHRHQSKHRT…PSIYAPLAIH (111 aa)) are Cytoplasmic-facing. 2 disordered regions span residues 488-514 (RTSA…KRAS) and 529-550 (KDTQ…EAPQ). At Ser-514 the chain carries Phosphoserine. An ITIM motif 1 motif is present at residues 552–557 (VTYAQL). Residues 562-578 (LRREATEPPPSQEREPP) are compositionally biased toward basic and acidic residues. A disordered region spans residues 562 to 590 (LRREATEPPPSQEREPPAEPSIYAPLAIH). Positions 582 to 587 (SIYAPL) match the ITIM motif 2 motif.

As to expression, detected in a natural killer (NK) cells.

It is found in the membrane. Functionally, may act as receptor for class I MHC antigens. The protein is Leukocyte immunoglobulin-like receptor subfamily B member 5 (LILRB5) of Homo sapiens (Human).